A 254-amino-acid chain; its full sequence is Rho-related protein racD (254 aa).

15-22 (GDGAVGKT) lines the GTP pocket. Residues 37 to 45 (YVPTVFDNF) carry the Effector region motif. GTP contacts are provided by residues 62–66 (DTAGQ) and 120–123 (TKTD). Over residues 186–231 (AVTSPTSKSSGKSSPSSTSSKPSKTTTTTTTSSSSSSPPAASTAKP) the composition is skewed to low complexity. The segment at 186 to 254 (AVTSPTSKSS…KDKDEKKPAK (69 aa)) is disordered. Basic and acidic residues predominate over residues 232-254 (AGEKKLSWGLFRKKDKDEKKPAK).

Belongs to the small GTPase superfamily. Rho family.

The protein is Rho-related protein racD (racD) of Dictyostelium discoideum (Social amoeba).